Here is a 995-residue protein sequence, read N- to C-terminus: Putative pentatricopeptide repeat-containing protein At5g09950 (995 aa).

PPR repeat units follow at residues 35–65, 66–100, 101–137, 138–169, 170–204, 205–241, 242–276, 278–303, 307–342, 348–378, 379–413, 414–448, 449–483, 484–515, 516–550, 551–581, 583–617, 618–652, 653–683, 684–718, 720–750, and 756–786; these read DVYL…MPLR, NCVS…GIFS, NQYA…SYAV, DAVV…IEVK, NSVS…GSRP, TEYT…GLLT, DLFV…NAVT, NGLM…MNSM, SPES…VITT, MVGI…MTDK, DSVS…DILP, GSFT…GIDL, NVSV…DQVS, WNSI…GQKL, NRIT…NIAD, EATT…MAER, DNVT…GQRL, DSFM…CLES, DVVV…MPVR, NSYS…GQTP, DHVT…MSDS, and RIEH…MPMK. The interval 791 to 868 is type E motif; that stretch reads IWRTVLGACC…EAGYSWVTMK (78 aa). The type E(+) motif stretch occupies residues 869–899; that stretch reads DGVHMFVAGDKSHPDADVIYKKLKELNRKMR. Residues 900 to 995 are type DYW motif; it reads DAGYVPQTGF…DGACSCSDFW (96 aa).

This sequence belongs to the PPR family. PCMP-H subfamily.

The polypeptide is Putative pentatricopeptide repeat-containing protein At5g09950 (PCMP-H35) (Arabidopsis thaliana (Mouse-ear cress)).